A 230-amino-acid polypeptide reads, in one-letter code: Protein RESPONSE TO ABA AND SALT 1 (230 aa).

In terms of domain architecture, DOG1 spans 7-230 (SQSFTIFVDG…RLRDRDQERA (224 aa)).

Its function is as follows. Negative regulator of salt (NaCl) tolerance probably by enhancing abscisic acid (ABA) sensitivity. The protein is Protein RESPONSE TO ABA AND SALT 1 of Arabidopsis thaliana (Mouse-ear cress).